A 363-amino-acid polypeptide reads, in one-letter code: Spermidine/putrescine import ATP-binding protein PotA (363 aa).

The ABC transporter domain maps to 6–236 (VEFKNVIKKY…PINHFVADFI (231 aa)). 38 to 45 (GPSGCGKT) is a binding site for ATP.

The protein belongs to the ABC transporter superfamily. Spermidine/putrescine importer (TC 3.A.1.11.1) family. As to quaternary structure, the complex is composed of two ATP-binding proteins (PotA), two transmembrane proteins (PotB and PotC) and a solute-binding protein (PotD).

It is found in the cell membrane. It carries out the reaction ATP + H2O + polyamine-[polyamine-binding protein]Side 1 = ADP + phosphate + polyamineSide 2 + [polyamine-binding protein]Side 1.. Its function is as follows. Part of the ABC transporter complex PotABCD involved in spermidine/putrescine import. Responsible for energy coupling to the transport system. This chain is Spermidine/putrescine import ATP-binding protein PotA, found in Latilactobacillus sakei subsp. sakei (strain 23K) (Lactobacillus sakei subsp. sakei).